The chain runs to 616 residues: Chaperone protein HscA (616 aa).

Belongs to the heat shock protein 70 family.

Its function is as follows. Chaperone involved in the maturation of iron-sulfur cluster-containing proteins. Has a low intrinsic ATPase activity which is markedly stimulated by HscB. Involved in the maturation of IscU. The polypeptide is Chaperone protein HscA (Escherichia coli O17:K52:H18 (strain UMN026 / ExPEC)).